Consider the following 362-residue polypeptide: UV excision repair protein RAD23 homolog A (362 aa).

Residues 1–81 (MAVTITLKTL…VVVMVTKAKT (81 aa)) enclose the Ubiquitin-like domain. Disordered stretches follow at residues 80–160 (KTSP…LVTG) and 201–227 (GIPGSPEPEHGSVQESQVSEQPSTEAG). The span at 88 to 109 (PSEASPTATPESSTSFPSAPAS) shows a compositional bias: low complexity. Lys-122 is covalently cross-linked (Glycyl lysine isopeptide (Lys-Gly) (interchain with G-Cter in ubiquitin)). Phosphoserine occurs at positions 123, 128, 133, 136, and 138. The span at 126–144 (EESAPTTSPESVSGSVPSS) shows a compositional bias: low complexity. In terms of domain architecture, UBA 1 spans 161–201 (SEYETMLTEIMSMGYERERVVAALRASYNNPHRAVEYLLTG). 3 positions are modified to phosphoserine: Ser-205, Ser-294, and Ser-356. Positions 317–357 (PQEKEAIERLKALGFPESLVIQAYFACEKNENLAANFLLSQ) constitute a UBA 2 domain.

It belongs to the RAD23 family. In terms of assembly, interacts with XPC; the interaction is suggesting the existence of a functional equivalent variant XPC complex. Interacts with PSMD4 and PSMC5. Interacts with ATXN3. Interacts with UBQLN2.

The protein localises to the nucleus. Functionally, multiubiquitin chain receptor involved in modulation of proteasomal degradation. Binds to 'Lys-48'-linked polyubiquitin chains in a length-dependent manner and with a lower affinity to 'Lys-63'-linked polyubiquitin chains. Proposed to be capable to bind simultaneously to the 26S proteasome and to polyubiquitinated substrates and to deliver ubiquitinated proteins to the proteasome. Involved in nucleotide excision repair and is thought to be functional equivalent for RAD23B in global genome nucleotide excision repair (GG-NER) by association with XPC. In vitro, XPC:RAD23A dimer has NER activity. Can stabilize XPC. This is UV excision repair protein RAD23 homolog A (RAD23A) from Bos taurus (Bovine).